Here is a 136-residue protein sequence, read N- to C-terminus: UPF0310 protein HH_1062 (136 aa).

This sequence belongs to the UPF0310 family.

This is UPF0310 protein HH_1062 from Helicobacter hepaticus (strain ATCC 51449 / 3B1).